The chain runs to 476 residues: Protein DETOXIFICATION 17 (476 aa).

The next 12 membrane-spanning stretches (helical) occupy residues 29–51 (LWLS…ISVM), 70–90 (FASV…ETLC), 111–131 (FVLL…EQIL), 140–160 (IASV…AYGL), 177–197 (VFVC…LFVL), 205–225 (GAAL…SCYV), 252–272 (IAFP…LLVL), 286–306 (VLSI…GLGG), 326–346 (LAVY…VTVL), 363–383 (IIAY…LDGL), 405–425 (LGSY…HFHI), and 431–451 (WLGI…VTIF).

The protein belongs to the multi antimicrobial extrusion (MATE) (TC 2.A.66.1) family.

It is found in the membrane. The polypeptide is Protein DETOXIFICATION 17 (Arabidopsis thaliana (Mouse-ear cress)).